We begin with the raw amino-acid sequence, 274 residues long: 2,3,4,5-tetrahydropyridine-2,6-dicarboxylate N-succinyltransferase (274 aa).

The substrate site is built by arginine 104 and aspartate 141.

Belongs to the transferase hexapeptide repeat family. In terms of assembly, homotrimer.

Its subcellular location is the cytoplasm. The catalysed reaction is (S)-2,3,4,5-tetrahydrodipicolinate + succinyl-CoA + H2O = (S)-2-succinylamino-6-oxoheptanedioate + CoA. It participates in amino-acid biosynthesis; L-lysine biosynthesis via DAP pathway; LL-2,6-diaminopimelate from (S)-tetrahydrodipicolinate (succinylase route): step 1/3. The sequence is that of 2,3,4,5-tetrahydropyridine-2,6-dicarboxylate N-succinyltransferase from Shewanella denitrificans (strain OS217 / ATCC BAA-1090 / DSM 15013).